We begin with the raw amino-acid sequence, 487 residues long: Serine/threonine-protein kinase BSK7 (487 aa).

Gly-2 carries N-myristoyl glycine lipidation. The 267-residue stretch at Glu-59–Met-325 folds into the Protein kinase domain. ATP is bound by residues His-65–Val-73 and Lys-87. Residue Asp-181 is the Proton acceptor of the active site.

The protein belongs to the protein kinase superfamily. Ser/Thr protein kinase family.

It localises to the cell membrane. The catalysed reaction is L-seryl-[protein] + ATP = O-phospho-L-seryl-[protein] + ADP + H(+). It carries out the reaction L-threonyl-[protein] + ATP = O-phospho-L-threonyl-[protein] + ADP + H(+). In terms of biological role, probable serine/threonine kinase that acts as a positive regulator of brassinosteroid (BR) signaling downstream of the receptor kinase BRI1. Functions redundantly with BSK3, BSK5, BSK6 and BSK8. This chain is Serine/threonine-protein kinase BSK7, found in Arabidopsis thaliana (Mouse-ear cress).